Consider the following 415-residue polypeptide: Serine hydroxymethyltransferase (415 aa).

Residues leucine 119 and 123–125 (GHL) each bind (6S)-5,6,7,8-tetrahydrofolate. Position 228 is an N6-(pyridoxal phosphate)lysine (lysine 228). Residue 353 to 355 (SPF) participates in (6S)-5,6,7,8-tetrahydrofolate binding.

This sequence belongs to the SHMT family. In terms of assembly, homodimer. Pyridoxal 5'-phosphate is required as a cofactor.

The protein localises to the cytoplasm. It carries out the reaction (6R)-5,10-methylene-5,6,7,8-tetrahydrofolate + glycine + H2O = (6S)-5,6,7,8-tetrahydrofolate + L-serine. Its pathway is one-carbon metabolism; tetrahydrofolate interconversion. It participates in amino-acid biosynthesis; glycine biosynthesis; glycine from L-serine: step 1/1. Functionally, catalyzes the reversible interconversion of serine and glycine with tetrahydrofolate (THF) serving as the one-carbon carrier. Also exhibits THF-independent aldolase activity toward beta-hydroxyamino acids, producing glycine and aldehydes, via a retro-aldol mechanism. This is Serine hydroxymethyltransferase from Halorubrum lacusprofundi (strain ATCC 49239 / DSM 5036 / JCM 8891 / ACAM 34).